We begin with the raw amino-acid sequence, 720 residues long: Probable ATP-dependent RNA helicase DHX35 (720 aa).

One can recognise a Helicase ATP-binding domain in the interval 64–229; that stretch reads LYLIENYQTV…FNQNETSDPA (166 aa). 77 to 84 is a binding site for ATP; sequence GETGCGKS. Residues 176-179 carry the DEAH box motif; sequence DEAH. Residues 261–438 enclose the Helicase C-terminal domain; it reads TVETVVKIHQ…PVILQLKALG (178 aa).

This sequence belongs to the DEAD box helicase family. DEAH subfamily. In terms of assembly, identified in the spliceosome C complex.

The catalysed reaction is ATP + H2O = ADP + phosphate + H(+). May be involved in pre-mRNA splicing. The chain is Probable ATP-dependent RNA helicase DHX35 (DHX35) from Pongo abelii (Sumatran orangutan).